Reading from the N-terminus, the 248-residue chain is Pyridoxine 5'-phosphate synthase (248 aa).

Position 12 (asparagine 12) interacts with 3-amino-2-oxopropyl phosphate. A 1-deoxy-D-xylulose 5-phosphate-binding site is contributed by 14-15; it reads DH. Arginine 23 contacts 3-amino-2-oxopropyl phosphate. Histidine 48 functions as the Proton acceptor in the catalytic mechanism. Arginine 50 and histidine 55 together coordinate 1-deoxy-D-xylulose 5-phosphate. The active-site Proton acceptor is glutamate 75. Threonine 105 lines the 1-deoxy-D-xylulose 5-phosphate pocket. Catalysis depends on histidine 196, which acts as the Proton donor. 3-amino-2-oxopropyl phosphate is bound by residues glycine 197 and 218–219; that span reads GH.

It belongs to the PNP synthase family. In terms of assembly, homooctamer; tetramer of dimers.

Its subcellular location is the cytoplasm. The enzyme catalyses 3-amino-2-oxopropyl phosphate + 1-deoxy-D-xylulose 5-phosphate = pyridoxine 5'-phosphate + phosphate + 2 H2O + H(+). The protein operates within cofactor biosynthesis; pyridoxine 5'-phosphate biosynthesis; pyridoxine 5'-phosphate from D-erythrose 4-phosphate: step 5/5. Its function is as follows. Catalyzes the complicated ring closure reaction between the two acyclic compounds 1-deoxy-D-xylulose-5-phosphate (DXP) and 3-amino-2-oxopropyl phosphate (1-amino-acetone-3-phosphate or AAP) to form pyridoxine 5'-phosphate (PNP) and inorganic phosphate. The sequence is that of Pyridoxine 5'-phosphate synthase from Ectopseudomonas mendocina (strain ymp) (Pseudomonas mendocina).